A 381-amino-acid chain; its full sequence is cAMP-dependent protein kinase type I-beta regulatory subunit (381 aa).

Positions 1-136 (MASPSCFHSE…ALAKAISKNV (136 aa)) are dimerization and phosphorylation. Serine 3 is modified (phosphoserine). 3'-nitrotyrosine is present on tyrosine 21. The interval 66-88 (LARQKSNSQCDSHDEEISPTPPN) is disordered. 2 positions are modified to phosphoserine: serine 77 and serine 83. The residue at position 85 (threonine 85) is a Phosphothreonine. The Pseudophosphorylation motif signature appears at 96–100 (RRGGV). At arginine 97 the chain carries Omega-N-methylarginine. Residues 137–254 (LFSH…SKVS), glutamate 202, arginine 211, 255–381 (ILES…SLTV), glutamate 326, and arginine 335 contribute to the 3',5'-cyclic AMP site.

It belongs to the cAMP-dependent kinase regulatory chain family. In terms of assembly, the inactive holoenzyme is composed of two regulatory chains and two catalytic chains. Activation by cAMP releases the two active catalytic monomers and the regulatory dimer. Interacts with PRKX; regulates this cAMP-dependent protein kinase. Interacts with smAKAP; this interaction may target PRKAR1B to the plasma membrane. The pseudophosphorylation site binds to the substrate-binding region of the catalytic chain, resulting in the inhibition of its activity. Abundant in brain and testis. No expression in lung, heart, liver, spleen, kidney and skeletal muscle.

It is found in the cell membrane. Regulatory subunit of the cAMP-dependent protein kinases involved in cAMP signaling in cells. The polypeptide is cAMP-dependent protein kinase type I-beta regulatory subunit (Prkar1b) (Rattus norvegicus (Rat)).